We begin with the raw amino-acid sequence, 204 residues long: Thymidylate kinase (204 aa).

This sequence belongs to the thymidylate kinase family. In terms of assembly, homodimer; the dimer arrangement is orthogonal and not antiparallel as in human enzyme.

The enzyme catalyses dTMP + ATP = dTDP + ADP. Its pathway is pyrimidine metabolism; dTTP biosynthesis. Functionally, poxvirus TMP kinase is able to phosphorylate dTMP, dUMP and also dGMP from any purine and pyrimidine nucleoside triphosphate. The large substrate specificity is explained by the presence of a canal connecting the edge of the dimer interface to the TMP base binding pocket, canal not found in the human homolog. The chain is Thymidylate kinase (OPG178) from Cynomys gunnisoni (Gunnison's prairie dog).